The following is a 48-amino-acid chain: ATP synthase protein 8 (48 aa).

The chain crosses the membrane as a helical span at residues 13–35; the sequence is LTYGFTFILTILFLTSYVFLPMI.

This sequence belongs to the ATPase protein 8 family. In terms of assembly, F-type ATPases have 2 components, CF(1) - the catalytic core - and CF(0) - the membrane proton channel. In yeast, the dimeric form of ATP synthase consists of 18 polypeptides: alpha, beta, gamma, delta, epsilon, 4 (B), 5 (OSCP), 6 (A), 8, 9 (C), d, E (Tim11), f, g, h, i, j and k.

Its subcellular location is the mitochondrion membrane. In terms of biological role, mitochondrial membrane ATP synthase (F(1)F(0) ATP synthase or Complex V) produces ATP from ADP in the presence of a proton gradient across the membrane which is generated by electron transport complexes of the respiratory chain. F-type ATPases consist of two structural domains, F(1) - containing the extramembraneous catalytic core and F(0) - containing the membrane proton channel, linked together by a central stalk and a peripheral stalk. During catalysis, ATP synthesis in the catalytic domain of F(1) is coupled via a rotary mechanism of the central stalk subunits to proton translocation. Part of the complex F(0) domain. Minor subunit located with subunit a in the membrane. In Eremothecium gossypii (strain ATCC 10895 / CBS 109.51 / FGSC 9923 / NRRL Y-1056) (Yeast), this protein is ATP synthase protein 8 (ATP8).